The chain runs to 320 residues: Short-chain dehydrogenase/reductase ATR7 (320 aa).

NADP(+) is bound by residues Ser32, Ile34, Gln55, Asp70, Asn93, Lys134, Tyr167, Lys171, and Thr202. The active-site Proton acceptor is Tyr167. Catalysis depends on Lys171, which acts as the Lowers pKa of active site Tyr.

This sequence belongs to the short-chain dehydrogenases/reductases (SDR) family.

It functions in the pathway mycotoxin biosynthesis. Short-chain dehydrogenase/reductase; part of the core atranone cluster (CAC) which products are predicted to catalyze most or all steps of mycotoxin atranone synthesis, starting from geranylgeranyl pyrophosphate (GGPP). The initial cyclization of GGPP to dolabellane is probably performed by the terpene cyclase ATR13. The Baeyer-Villiger oxidation near the end of the atranone synthesis, which converts atranones D and E to atranones F and G is predicted to be catalyzed by the monooxygenase ATR8. Of the CAC's other predicted gene products, the reducing PKS ATR6 might synthesize a polyketide chain. This polyketide is probably transferred onto the atranone backbone by the polyketide transferase ATR5. Other predicted CAC products include 4 oxygenases (ATR2, ATR3, ATR4, and ATR14), 3 short-chain reductases (ATR7, ATR9, and ATR10), and a methyltransferase (ATR12). These may all be involved in the various steps of atranone biosynthesis, although their specific roles must await experimental determination. The protein is Short-chain dehydrogenase/reductase ATR7 of Stachybotrys chlorohalonatus (strain IBT 40285).